We begin with the raw amino-acid sequence, 669 residues long: MSKEIAKKRIEELRDLLNTFNYQYHVLDNPSVSDAEYDRNMQELIKLEAENPEFMSEDSPSVRVGGTILDIFEKVTHKSPMLSLGNAFNEGDLRDFDRRVRQGIDDANVRYICELKIDGLAVSLHYEKGRFIQGATRGDGVTGEDITQNLKTIKAIPLRLNEEVTLEARGEAYMPKRSFVKLNEEKEQNGEDVFANPRNAAAGSIRQLDPKIAAKRNLSMFVYGLANVEEKTIPSHSESLDFLGELGFKTNPNRRTCETIEEVIAYVEEWQEKRPHLDYEIDGIVIKVDDVALQESLGTTAKSPRWAIAYKFPAEEVVTRLTGIELSVGRTGVVTPTAELEPVRVAGTIVRRASLHNEDLIREKDIRIGDYVVVKKAGDIIPEVVNVIFDKRTGEEEEYRMPTHCPACESELVRLEEEVALRCINPTCPAQIREGLIHFVSRNAMNIDGLGERVITQLFDADYIRTFADLYALTKEQLLQLERFGEKSATNLIQAIENSKENSLERLLFGLGIRHVGAKAARTFAEHFETMDELVKATEEELKAINEIGEKMAQSVVTYFDNEDVLELLQQFKEYGVNMTYKGIKIADLQNVESYFAGKTVVLTGKLEVMGRSEAKKKIEALGGKVTGSVSKSTDLVVAGESAGSKLAQAEKHNVEVWNEERFLQELNK.

NAD(+) contacts are provided by residues 34–38 (DAEYD), 83–84 (SL), and E114. The active-site N6-AMP-lysine intermediate is K116. NAD(+) is bound by residues R137, E171, K287, and K311. Zn(2+)-binding residues include C405, C408, C423, and C428. A BRCT domain is found at 591 to 669 (NVESYFAGKT…EERFLQELNK (79 aa)).

It belongs to the NAD-dependent DNA ligase family. LigA subfamily. The cofactor is Mg(2+). Mn(2+) is required as a cofactor.

The catalysed reaction is NAD(+) + (deoxyribonucleotide)n-3'-hydroxyl + 5'-phospho-(deoxyribonucleotide)m = (deoxyribonucleotide)n+m + AMP + beta-nicotinamide D-nucleotide.. Functionally, DNA ligase that catalyzes the formation of phosphodiester linkages between 5'-phosphoryl and 3'-hydroxyl groups in double-stranded DNA using NAD as a coenzyme and as the energy source for the reaction. It is essential for DNA replication and repair of damaged DNA. The polypeptide is DNA ligase (Bacillus cereus (strain G9842)).